Reading from the N-terminus, the 344-residue chain is MWKLSAILLVAAASAVVIPGHREAPALTGQALIDYVNSAQKLWTAGHQVIPKEKITKKLMDVKYLVPHKDEDIVATEVSDAIPDHFDARDQWPNCMSINNIRDQSDCGSCWAFAAAEAISDRTCIASNGAVNTLLSSEDLLSCCTGMFSCGNGCEGGYPIQAWKWWVKHGLVTGGSYETQFGCKPYSIAPCGETVNGVKWPACPEDTEPTPKCVDSCTSKNNYATPYLQDKHFGSTAYAVGKKVEQIQTEILTNGPIEVAFTVYEDFYQYTTGVYVHTAGASLGGHAVKILGWGVDNGTPYWLVANSWNVAWGEKGYFRIIRGLNECGIEHSAVAGIPDLARHN.

Positions 1-15 are cleaved as a signal peptide; sequence MWKLSAILLVAAASA. Residues 16–81 constitute a propeptide that is removed on maturation; it reads VVIPGHREAP…DIVATEVSDA (66 aa). Disulfide bonds link cysteine 95/cysteine 124, cysteine 107/cysteine 154, cysteine 143/cysteine 213, cysteine 144/cysteine 150, cysteine 183/cysteine 217, and cysteine 191/cysteine 203. Residue cysteine 110 is part of the active site. Residues histidine 286 and asparagine 306 contribute to the active site.

Belongs to the peptidase C1 family.

In Caenorhabditis elegans, this protein is Cathepsin B-like cysteine proteinase 5 (cpr-5).